The following is a 953-amino-acid chain: Ribonuclease E (953 aa).

2 disordered regions span residues 1 to 23 (MIDG…PDRL) and 118 to 314 (VAPQ…RRRP). The segment covering 14-23 (SQHEELPDRL) has biased composition (basic and acidic residues). Acidic residues predominate over residues 127–150 (LADDEDVDDGPDYVADDSDADDEG). The segment covering 157 to 169 (NRRRRRGRRGRGR) has biased composition (basic residues). Residues 183–193 (DQQSEPRAQQF) show a composition bias toward polar residues. The span at 199 to 223 (AETDDGDDRDSEDTEAGDNGEDENG) shows a compositional bias: acidic residues. The segment covering 230–240 (RRRRRRRRRKS) has biased composition (basic residues). 2 stretches are compositionally biased toward basic and acidic residues: residues 263–272 (VHERVPRAGD) and 294–311 (TRLE…DAGR). The region spanning 376–453 (GNIYLGIVQN…GHKGARLTTQ (78 aa)) is the S1 motif domain. Mg(2+)-binding residues include Asp-647 and Asp-691. Zn(2+) is bound by residues Cys-749 and Cys-752. Disordered stretches follow at residues 766–808 (SAAA…APGE) and 822–953 (LAGR…IRLD). A compositionally biased stretch (acidic residues) spans 848–915 (DLDDTAQADF…DADVDEEDAA (68 aa)).

Belongs to the RNase E/G family. In terms of assembly, assembles into a homotetramer formed by a dimer of dimers. Interacts with DNA-binding protein HU (hupB). The cofactor is Mg(2+). Zn(2+) is required as a cofactor.

It is found in the cytoplasm. The enzyme catalyses Endonucleolytic cleavage of single-stranded RNA in A- and U-rich regions.. Its function is as follows. Endoribonuclease that plays a central role in RNA processing and decay. Plays a major role in pre-16S rRNA maturation, probably generating the mature 5'-end, and a minor role in pre-5S and pre-23S rRNA maturation. Probably also processes tRNA. RNase E and HupB jointly contribute to cellular adaptation to changing growth conditions and survival during antibiotic treatment and in the host. The protein is Ribonuclease E of Mycobacterium tuberculosis (strain ATCC 25618 / H37Rv).